Reading from the N-terminus, the 89-residue chain is Small ribosomal subunit protein uS15 (89 aa).

A compositionally biased stretch (basic and acidic residues) spans 1–10; the sequence is MSITAERKAE. The segment at 1–24 is disordered; it reads MSITAERKAEVIQGNANKAGDTGS.

It belongs to the universal ribosomal protein uS15 family. As to quaternary structure, part of the 30S ribosomal subunit. Forms a bridge to the 50S subunit in the 70S ribosome, contacting the 23S rRNA.

One of the primary rRNA binding proteins, it binds directly to 16S rRNA where it helps nucleate assembly of the platform of the 30S subunit by binding and bridging several RNA helices of the 16S rRNA. Its function is as follows. Forms an intersubunit bridge (bridge B4) with the 23S rRNA of the 50S subunit in the ribosome. This chain is Small ribosomal subunit protein uS15, found in Rhodopseudomonas palustris (strain BisB5).